The following is a 319-amino-acid chain: ATP-dependent 6-phosphofructokinase (319 aa).

Gly11 contributes to the ATP binding site. 21 to 25 (RAVVR) provides a ligand contact to ADP. Residues 72-73 (RC) and 102-105 (GDGS) each bind ATP. Position 103 (Asp103) interacts with Mg(2+). 125-127 (TID) is a binding site for substrate. Asp127 serves as the catalytic Proton acceptor. Arg154 serves as a coordination point for ADP. Residues Arg162 and 169–171 (MGR) contribute to the substrate site. ADP-binding positions include 185 to 187 (GAE), Arg211, and 213 to 215 (KKH). Residues Glu222, Arg243, and 249 to 252 (HMQR) each bind substrate.

It belongs to the phosphofructokinase type A (PFKA) family. ATP-dependent PFK group I subfamily. Prokaryotic clade 'B1' sub-subfamily. In terms of assembly, homotetramer. The cofactor is Mg(2+).

It is found in the cytoplasm. The enzyme catalyses beta-D-fructose 6-phosphate + ATP = beta-D-fructose 1,6-bisphosphate + ADP + H(+). It participates in carbohydrate degradation; glycolysis; D-glyceraldehyde 3-phosphate and glycerone phosphate from D-glucose: step 3/4. Allosterically activated by ADP and other diphosphonucleosides, and allosterically inhibited by phosphoenolpyruvate. Its function is as follows. Catalyzes the phosphorylation of D-fructose 6-phosphate to fructose 1,6-bisphosphate by ATP, the first committing step of glycolysis. This chain is ATP-dependent 6-phosphofructokinase, found in Macrococcus caseolyticus (strain JCSC5402) (Macrococcoides caseolyticum).